Here is a 71-residue protein sequence, read N- to C-terminus: MFLSLPTLTVLIPLVSLAGLFYSASVEENFPQGCTSTASLCFYSLLLPITIPVYVFFHLWTWMGIKLFRHN.

Residues 1-3 (MFL) lie on the Cytoplasmic side of the membrane. Residues 4 to 26 (SLPTLTVLIPLVSLAGLFYSASV) traverse the membrane as a helical segment. Over 27–44 (EENFPQGCTSTASLCFYS) the chain is Lumenal. The helical transmembrane segment at 45–65 (LLLPITIPVYVFFHLWTWMGI) threads the bilayer. Over 66 to 71 (KLFRHN) the chain is Cytoplasmic.

As to quaternary structure, component of the glycosylphosphatidylinositol-N-acetylglucosaminyltransferase (GPI-GnT) complex composed at least by PIGA, PIGC, PIGH, PIGP, PIGQ, PIGY and DPM2. Interacts directly with PIGA; this interaction regulates glycosylphosphatidylinositol-N-acetylglucosaminyltransferase activity. Does not interact with Ras proteins.

The protein resides in the endoplasmic reticulum membrane. Its pathway is glycolipid biosynthesis; glycosylphosphatidylinositol-anchor biosynthesis. Part of the glycosylphosphatidylinositol-N-acetylglucosaminyltransferase (GPI-GnT) complex that catalyzes the transfer of N-acetylglucosamine from UDP-N-acetylglucosamine to phosphatidylinositol and participates in the first step of GPI biosynthesis. May act by regulating the catalytic subunit PIGA. The polypeptide is Phosphatidylinositol N-acetylglucosaminyltransferase subunit Y (Homo sapiens (Human)).